The following is a 57-amino-acid chain: DNA-directed RNA polymerase subunit Rpo6 (57 aa).

Belongs to the archaeal Rpo6/eukaryotic RPB6 RNA polymerase subunit family. As to quaternary structure, part of the RNA polymerase complex.

It localises to the cytoplasm. The enzyme catalyses RNA(n) + a ribonucleoside 5'-triphosphate = RNA(n+1) + diphosphate. Its function is as follows. DNA-dependent RNA polymerase (RNAP) catalyzes the transcription of DNA into RNA using the four ribonucleoside triphosphates as substrates. The polypeptide is DNA-directed RNA polymerase subunit Rpo6 (Methanocaldococcus jannaschii (strain ATCC 43067 / DSM 2661 / JAL-1 / JCM 10045 / NBRC 100440) (Methanococcus jannaschii)).